We begin with the raw amino-acid sequence, 126 residues long: Probable prefoldin subunit 4 (126 aa).

This sequence belongs to the prefoldin subunit beta family. As to quaternary structure, heterohexamer of two PFD-alpha type and four PFD-beta type subunits.

Binds specifically to cytosolic chaperonin (c-CPN) and transfers target proteins to it. Binds to nascent polypeptide chain and promotes folding in an environment in which there are many competing pathways for nonnative proteins. This Caenorhabditis elegans protein is Probable prefoldin subunit 4 (pfd-4).